Reading from the N-terminus, the 369-residue chain is Variable large protein 7 (369 aa).

Positions 1 to 26 are cleaved as a signal peptide; sequence MRKRISAIINKLNISIIIMTVVLMIG. A lipid anchor (N-palmitoyl cysteine) is attached at Cys-27. A lipid anchor (S-diacylglycerol cysteine) is attached at Cys-27.

This sequence belongs to the variable large protein (Vlp) family. Alpha subfamily.

It is found in the cell outer membrane. Its function is as follows. The Vlp and Vsp proteins are antigenically distinct proteins, only one vlp or vsp gene is transcriptionally active at any one time. Switching between these genes is a mechanism of host immune response evasion. In Borrelia hermsii, this protein is Variable large protein 7.